Consider the following 495-residue polypeptide: Phosphomethylpyrimidine synthase (495 aa).

Substrate is bound by residues Asn125, Met154, Tyr183, His219, Ser239–Gly241, Asp280–Arg283, and Glu319. Position 323 (His323) interacts with Zn(2+). Residue Tyr346 coordinates substrate. His387 provides a ligand contact to Zn(2+). [4Fe-4S] cluster contacts are provided by Cys467, Cys470, and Cys475.

It belongs to the ThiC family. The cofactor is [4Fe-4S] cluster.

It carries out the reaction 5-amino-1-(5-phospho-beta-D-ribosyl)imidazole + S-adenosyl-L-methionine = 4-amino-2-methyl-5-(phosphooxymethyl)pyrimidine + CO + 5'-deoxyadenosine + formate + L-methionine + 3 H(+). The protein operates within cofactor biosynthesis; thiamine diphosphate biosynthesis. Catalyzes the synthesis of the hydroxymethylpyrimidine phosphate (HMP-P) moiety of thiamine from aminoimidazole ribotide (AIR) in a radical S-adenosyl-L-methionine (SAM)-dependent reaction. This chain is Phosphomethylpyrimidine synthase, found in Leptospira interrogans serogroup Icterohaemorrhagiae serovar Lai (strain 56601).